Here is a 216-residue protein sequence, read N- to C-terminus: ATP-dependent Clp protease proteolytic subunit (216 aa).

Catalysis depends on serine 101, which acts as the Nucleophile. Histidine 126 is an active-site residue.

Belongs to the peptidase S14 family. In terms of assembly, component of the chloroplastic Clp protease core complex.

The protein localises to the plastid. Its subcellular location is the chloroplast stroma. The enzyme catalyses Hydrolysis of proteins to small peptides in the presence of ATP and magnesium. alpha-casein is the usual test substrate. In the absence of ATP, only oligopeptides shorter than five residues are hydrolyzed (such as succinyl-Leu-Tyr-|-NHMec, and Leu-Tyr-Leu-|-Tyr-Trp, in which cleavage of the -Tyr-|-Leu- and -Tyr-|-Trp bonds also occurs).. Functionally, cleaves peptides in various proteins in a process that requires ATP hydrolysis. Has a chymotrypsin-like activity. Plays a major role in the degradation of misfolded proteins. The protein is ATP-dependent Clp protease proteolytic subunit of Saccharum hybrid (Sugarcane).